The sequence spans 490 residues: V-type proton ATPase subunit B (490 aa).

R380 provides a ligand contact to ATP.

It belongs to the ATPase alpha/beta chains family. As to quaternary structure, V-ATPase is a heteromultimeric enzyme made up of two complexes: the ATP-hydrolytic V1 complex and the proton translocation V0 complex. The V1 complex consists of three catalytic AB heterodimers that form a heterohexamer, three peripheral stalks each consisting of EG heterodimers, one central rotor including subunits D and F, and the regulatory subunits C and H. The proton translocation complex V0 consists of the proton transport subunit a, a ring of proteolipid subunits c9c'', rotary subunit d, subunits e and f, and the accessory subunits VhaAC45 and ATP6AP2. In terms of tissue distribution, expressed in Malpighian tubules, rectum, antennal palps and oviduct.

Non-catalytic subunit of the V1 complex of vacuolar(H+)-ATPase (V-ATPase), a multisubunit enzyme composed of a peripheral complex (V1) that hydrolyzes ATP and a membrane integral complex (V0) that translocates protons. V-ATPase is responsible for acidifying and maintaining the pH of intracellular compartments and in some cell types, is targeted to the plasma membrane, where it is responsible for acidifying the extracellular environment. Essential for the proper assembly and activity of V-ATPase. The protein is V-type proton ATPase subunit B (Vha55) of Drosophila melanogaster (Fruit fly).